A 219-amino-acid polypeptide reads, in one-letter code: Probable 3-beta-hydroxysteroid-Delta(8),Delta(7)-isomerase (219 aa).

A run of 4 helical transmembrane segments spans residues Ile29 to Gly49, Leu62 to Phe82, Val119 to Ala139, and Phe181 to Ile201. Positions Thr58–Ala200 constitute an EXPERA domain.

Belongs to the EBP family.

It is found in the endoplasmic reticulum membrane. It catalyses the reaction lathosterol = 5alpha-cholest-8-en-3beta-ol. The protein operates within steroid biosynthesis; sterol biosynthesis. Catalyzes the conversion of Delta(8)-sterols to their corresponding Delta(7)-isomers. This Oryza sativa subsp. japonica (Rice) protein is Probable 3-beta-hydroxysteroid-Delta(8),Delta(7)-isomerase.